Consider the following 329-residue polypeptide: Glutamyl-tRNA reductase (329 aa).

Residues 51-54, S99, 104-106, and Q110 contribute to the substrate site; these read TCLR and EDQ. The active-site Nucleophile is C52. An NADP(+)-binding site is contributed by 179-184; the sequence is GIGELA.

The protein belongs to the glutamyl-tRNA reductase family. As to quaternary structure, homodimer.

It carries out the reaction (S)-4-amino-5-oxopentanoate + tRNA(Glu) + NADP(+) = L-glutamyl-tRNA(Glu) + NADPH + H(+). It functions in the pathway porphyrin-containing compound metabolism; protoporphyrin-IX biosynthesis; 5-aminolevulinate from L-glutamyl-tRNA(Glu): step 1/2. Catalyzes the NADPH-dependent reduction of glutamyl-tRNA(Glu) to glutamate 1-semialdehyde (GSA). The sequence is that of Glutamyl-tRNA reductase from Fusobacterium nucleatum subsp. nucleatum (strain ATCC 25586 / DSM 15643 / BCRC 10681 / CIP 101130 / JCM 8532 / KCTC 2640 / LMG 13131 / VPI 4355).